The following is a 228-amino-acid chain: Fluoride-specific ion channel FluC (228 aa).

7 helical membrane passes run 3–23 (LSLFAIALGGAAGALARFWVS), 37–57 (GTLFINVSGSFLMGFLSVMMI), 72–92 (VGFLGAYTTFSTFSLETLALF), 101–121 (ALNVLLSVVLCLAAVWVGAVL), 141–161 (IFGAACGMSLLAGFAAALAFA), 172–192 (LVLVALTGLVVVGTLVALVVT), and 202–222 (LWGAFTLSAFAAVVFLSLGLV). 2 residues coordinate Na(+): Gly76 and Thr79.

Belongs to the fluoride channel Fluc/FEX (TC 1.A.43) family.

The protein localises to the cell inner membrane. It carries out the reaction fluoride(in) = fluoride(out). Na(+) is not transported, but it plays an essential structural role and its presence is essential for fluoride channel function. Fluoride-specific ion channel. Important for reducing fluoride concentration in the cell, thus reducing its toxicity. The polypeptide is Fluoride-specific ion channel FluC (Methylococcus capsulatus (strain ATCC 33009 / NCIMB 11132 / Bath)).